The sequence spans 1527 residues: DNA (cytosine-5)-methyltransferase 1A (1527 aa).

Disordered regions lie at residues 1-62 (MAKS…PKRA) and 661-718 (GDTK…KEIK). Composition is skewed to acidic residues over residues 25-36 (EPVENENLESEF) and 664-692 (KEED…EVNV). Positions 709–718 (SSADTRKEIK) are enriched in basic and acidic residues. BAH domains lie at 742-874 (LSIS…FSLP) and 910-1049 (ITYN…KQLP). The region spanning 1092-1526 (LATLDIFAGC…RKLKQAIDAK (435 aa)) is the SAM-dependent MTase C5-type domain. Cys-1197 is a catalytic residue.

Belongs to the class I-like SAM-binding methyltransferase superfamily. C5-methyltransferase family. As to expression, expressed in roots and inflorescences. Expressed in roots, panicles, anthers, pistils, endosperm and imbibed embryos. Expressed in tissues containing actively replicating and dividing cells, such as shoot and root meristems.

It localises to the nucleus. It carries out the reaction a 2'-deoxycytidine in DNA + S-adenosyl-L-methionine = a 5-methyl-2'-deoxycytidine in DNA + S-adenosyl-L-homocysteine + H(+). Its function is as follows. Probably methylates CpG residues and maintains DNA methylation. May be involved in methylation-dependent gene silencing. May play a minor role in the maintenance of DNA methylation. The polypeptide is DNA (cytosine-5)-methyltransferase 1A (Oryza sativa subsp. japonica (Rice)).